The sequence spans 64 residues: Prokaryotic ubiquitin-like protein Pup (64 aa).

The tract at residues 1 to 36 (MAQEQTKRGGGGGDDEDVTGTTAAGQERRKKLAQDT) is disordered. The segment at 21–58 (TTAAGQERRKKLAQDTDDLLDEIDDVLEENAEDFVRAY) is ARC ATPase binding. A coiled-coil region spans residues 26–52 (QERRKKLAQDTDDLLDEIDDVLEENAE). Glutamine 64 bears the Deamidated glutamine mark. Glutamine 64 participates in a covalent cross-link: Isoglutamyl lysine isopeptide (Gln-Lys) (interchain with K-? in acceptor proteins).

The protein belongs to the prokaryotic ubiquitin-like protein family. In terms of assembly, strongly interacts with the proteasome-associated ATPase ARC through a hydrophobic interface; the interacting region of Pup lies in its C-terminal half. There is one Pup binding site per ARC hexamer ring. Post-translationally, is modified by deamidation of its C-terminal glutamine to glutamate by the deamidase Dop, a prerequisite to the subsequent pupylation process.

It participates in protein degradation; proteasomal Pup-dependent pathway. In terms of biological role, protein modifier that is covalently attached to lysine residues of substrate proteins, thereby targeting them for proteasomal degradation. The tagging system is termed pupylation. The sequence is that of Prokaryotic ubiquitin-like protein Pup from Mycobacterium ulcerans (strain Agy99).